The chain runs to 103 residues: UPF0091 protein PH0944 (103 aa).

It belongs to the UPF0091 family.

The protein is UPF0091 protein PH0944 of Pyrococcus horikoshii (strain ATCC 700860 / DSM 12428 / JCM 9974 / NBRC 100139 / OT-3).